The primary structure comprises 385 residues: Alkanesulfonate monooxygenase 2 (385 aa).

The protein belongs to the SsuD family.

The enzyme catalyses an alkanesulfonate + FMNH2 + O2 = an aldehyde + FMN + sulfite + H2O + 2 H(+). Its function is as follows. Catalyzes the desulfonation of aliphatic sulfonates. The chain is Alkanesulfonate monooxygenase 2 (ssuD2) from Mesorhizobium japonicum (strain LMG 29417 / CECT 9101 / MAFF 303099) (Mesorhizobium loti (strain MAFF 303099)).